Reading from the N-terminus, the 89-residue chain is Large ribosomal subunit protein bL27 (89 aa).

A disordered region spans residues 1-21 (MAHKKAGGSSRNGRDSAGRRL).

It belongs to the bacterial ribosomal protein bL27 family.

The sequence is that of Large ribosomal subunit protein bL27 from Erythrobacter litoralis (strain HTCC2594).